A 765-amino-acid polypeptide reads, in one-letter code: Zinc transporter ZIP6 (765 aa).

A signal peptide spans 1–20 (MATDLSVIMILTFALWVTSP). At 21 to 335 (LHELQSTAAF…PKTYSLQIAW (315 aa)) the chain is on the extracellular side. N68 is a glycosylation site (N-linked (GlcNAc...) asparagine). Basic and acidic residues-rich tracts occupy residues 96–135 (DHEH…DHEH) and 174–186 (RPAE…RNIK). Disordered stretches follow at residues 96 to 196 (DHEH…EVTS) and 209 to 257 (VETI…SEPR). Residues 187 to 196 (ESASSSEVTS) show a composition bias toward low complexity. The span at 224–233 (VNPSTPPSIT) shows a compositional bias: polar residues. Positions 238 to 247 (VGRLSRLARK) are enriched in basic residues. Basic and acidic residues predominate over residues 248–257 (KSNESVSEPR). 3 N-linked (GlcNAc...) asparagine glycosylation sites follow: N250, N275, and N292. Residues 336–356 (LGGFIAISIISFLSLLGVILV) traverse the membrane as a helical segment. Residues 357 to 365 (PLMNRVFFK) lie on the Cytoplasmic side of the membrane. The chain crosses the membrane as a helical span at residues 366 to 386 (FLLSFLVALAVGTLSGDALLH). Residues 387-433 (LLPHSHASHQHSHSHEEPAMEMKRGPLFSHLSAQNIEESSYFDSTWK) are Extracellular-facing. A helical transmembrane segment spans residues 434–454 (GLTALGGLYFMFLVEHVLTLI). Topologically, residues 455–667 (KQFKDKKKKN…LKAGMTVKQA (213 aa)) are cytoplasmic. A disordered region spans residues 458-519 (KDKKKKNQKK…EPSPFDSQQP (62 aa)). The stretch at 475-495 (ESKKQLSKYDSQLSSNEEKVD) forms a coiled coil. Phosphoserine occurs at positions 481 and 488. A compositionally biased stretch (basic and acidic residues) spans 490-508 (NEEKVDPGERPESYLRADS). Polar residues predominate over residues 509-519 (QEPSPFDSQQP). A helical transmembrane segment spans residues 668-688 (VLYNALSAMLAYLGMATGIFI). At 689-696 (GHYAENVS) the chain is on the extracellular side. A glycan (N-linked (GlcNAc...) asparagine) is linked at N694. A helical transmembrane segment spans residues 697–717 (MWIFALTAGLFMYVALVDMVP). The Cytoplasmic portion of the chain corresponds to 718-734 (EMLHNDASDHGCSRWGY). A helical transmembrane segment spans residues 735-755 (FFLQNAGILLGFGIMLLISIF). Residues 756–765 (EHKIVFRINF) are Extracellular-facing.

It belongs to the ZIP transporter (TC 2.A.5) family. Interacts with SLC39A10; which triggers cells to undergo EMT and mitosis. Found in a complex with SLC39A6, SLC39A10 and with the 'Ser-727' phosphorylated form of STAT3 throughout mitosis. Found in a complex with SLC39A6, SLC39A10 and with NCAM1; this complex controls NCAM1 phosphorylation and integration into focal adhesion complexes during epithelial-to-mesenchymal transition (EMT). Found in a complex with SLC39A6, SLC39A10 and with GSK3B that controls NCAM1 phosphorylation. In terms of processing, cleaved on the N-terminus before locating to the plasma membrane. N-glycosylated. Post-translationally, phosphorylated by ZAP70 in response to TCR stimulation leading to its activation. As to expression, highly expressed in the brain and testis. In the brain strongly expressed in the CA1 and CA3 regions, Purkinje cells in cerebellum and dentate gyrus in hippocampus. In testis found in spermatids or mature sperms in the central areas of seminiferous tubules.

The protein localises to the cell membrane. The protein resides in the cell projection. Its subcellular location is the lamellipodium membrane. It localises to the membrane raft. It is found in the apical cell membrane. It carries out the reaction Zn(2+)(in) = Zn(2+)(out). Functionally, zinc-influx transporter which plays a role in zinc homeostasis and in the induction of epithelial-to-mesenchymal transition (EMT). When associated with SLC39A10, the heterodimer formed by SLC39A10 and SLC39A6 mediates cellular zinc uptake to trigger cells to undergo epithelial- to-mesenchymal transition (EMT). The SLC39A10-SLC39A6 heterodimer also controls NCAM1 phosphorylation and its integration into focal adhesion complexes during EMT. Zinc influx inactivates GSK3B, enabling unphosphorylated SNAI1 in the nucleus to down-regulate adherence genes such as E-cadherin, causing loss of cell adherence. In addition, the SLC39A10-SLC39A6 heterodimer plays an essentiel role in initiating mitosis by importing zinc into cells to initiate a pathway resulting in the onset of mitosis. Participates in the T-cell receptor signaling regulation by mediating cellular zinc uptake into activated lymphocytes. Regulates the zinc influx necessary for proper meiotic progression to metaphase II (MII) that allows the oocyte-to-egg transition. This chain is Zinc transporter ZIP6, found in Mus musculus (Mouse).